Here is a 259-residue protein sequence, read N- to C-terminus: MSRKSVMSSTFEPSLSTSRQPLGPSLADTLPSINFGFDELRDRMAKFTAKFDAFIEQGRKRVLEERNQFRMNVAELQEDQRMKKKDIEILQLKTNTYQQTMAKEAAETREMQAAIASLTEQRDKQAAMRDALKEQIAATQREIDARLAAQRAHAAQLEAQARYNVPELDFWVTNLCMRIEGAGAEDRLKFVYTHIDERNWEREAWFELSMSGRDYDVRHCRPKLEREKVEKVLDRVNETRELVVLLKGMRELFVEAMKS.

Residues 1 to 20 are compositionally biased toward polar residues; that stretch reads MSRKSVMSSTFEPSLSTSRQ. The disordered stretch occupies residues 1–25; that stretch reads MSRKSVMSSTFEPSLSTSRQPLGPS. A coiled-coil region spans residues 59 to 162; that stretch reads RKRVLEERNQ…HAAQLEAQAR (104 aa).

The protein belongs to the SPC25 family. Component of the NDC80 complex, which consists of kpr-1/ndc80, kpr-2/nuf2, kpr-3/spc24 and kpr-4/spc25.

Its subcellular location is the nucleus. It is found in the chromosome. It localises to the centromere. The protein localises to the kinetochore. Its function is as follows. Acts as a component of the essential kinetochore-associated NDC80 complex, which is required for chromosome segregation and spindle checkpoint activity. In Neurospora crassa (strain ATCC 24698 / 74-OR23-1A / CBS 708.71 / DSM 1257 / FGSC 987), this protein is Probable kinetochore protein spc25 (kpr-4).